The following is a 369-amino-acid chain: Flagellar P-ring protein (369 aa).

The N-terminal stretch at 1–23 (MIKQFAVSLLLVLLTLVTTTASA) is a signal peptide.

This sequence belongs to the FlgI family. In terms of assembly, the basal body constitutes a major portion of the flagellar organelle and consists of four rings (L,P,S, and M) mounted on a central rod.

The protein resides in the periplasm. Its subcellular location is the bacterial flagellum basal body. Its function is as follows. Assembles around the rod to form the L-ring and probably protects the motor/basal body from shearing forces during rotation. The protein is Flagellar P-ring protein of Photorhabdus laumondii subsp. laumondii (strain DSM 15139 / CIP 105565 / TT01) (Photorhabdus luminescens subsp. laumondii).